A 90-amino-acid polypeptide reads, in one-letter code: Auxin-responsive protein SAUR24 (90 aa).

It belongs to the ARG7 family.

The protein resides in the cell membrane. In terms of biological role, functions as a positive effector of cell expansion through modulation of auxin transport. The sequence is that of Auxin-responsive protein SAUR24 from Arabidopsis thaliana (Mouse-ear cress).